A 118-amino-acid polypeptide reads, in one-letter code: Large ribosomal subunit protein uL18 (118 aa).

It belongs to the universal ribosomal protein uL18 family. As to quaternary structure, part of the 50S ribosomal subunit; part of the 5S rRNA/L5/L18/L25 subcomplex. Contacts the 5S and 23S rRNAs.

Functionally, this is one of the proteins that bind and probably mediate the attachment of the 5S RNA into the large ribosomal subunit, where it forms part of the central protuberance. The protein is Large ribosomal subunit protein uL18 of Acidobacterium capsulatum (strain ATCC 51196 / DSM 11244 / BCRC 80197 / JCM 7670 / NBRC 15755 / NCIMB 13165 / 161).